Reading from the N-terminus, the 161-residue chain is Phosphopantetheine adenylyltransferase (161 aa).

Thr-9 contributes to the substrate binding site. ATP is bound by residues 9–10 (TF) and His-17. Residues Lys-41, Leu-73, and Arg-87 each coordinate substrate. Residues 88 to 90 (GLR), Glu-98, and 123 to 129 (YQFISGT) contribute to the ATP site.

This sequence belongs to the bacterial CoaD family. In terms of assembly, homohexamer. Requires Mg(2+) as cofactor.

It localises to the cytoplasm. It catalyses the reaction (R)-4'-phosphopantetheine + ATP + H(+) = 3'-dephospho-CoA + diphosphate. It functions in the pathway cofactor biosynthesis; coenzyme A biosynthesis; CoA from (R)-pantothenate: step 4/5. Its function is as follows. Reversibly transfers an adenylyl group from ATP to 4'-phosphopantetheine, yielding dephospho-CoA (dPCoA) and pyrophosphate. The polypeptide is Phosphopantetheine adenylyltransferase (Cupriavidus taiwanensis (strain DSM 17343 / BCRC 17206 / CCUG 44338 / CIP 107171 / LMG 19424 / R1) (Ralstonia taiwanensis (strain LMG 19424))).